The sequence spans 85 residues: Alpha-insect toxin BjaIT (85 aa).

Positions 1 to 19 (MNYLVVICFALLLMTGVES) are cleaved as a signal peptide. One can recognise an LCN-type CS-alpha/beta domain in the interval 21-83 (RDAYIADNLN…VPIRIPGACR (63 aa)). Disulfide bonds link C31–C82, C35–C55, C41–C65, and C45–C67. Residue R83 is modified to Arginine amide.

This sequence belongs to the long (4 C-C) scorpion toxin superfamily. Sodium channel inhibitor family. Alpha subfamily. As to expression, expressed by the venom gland.

The protein resides in the secreted. Its function is as follows. Alpha toxins bind voltage-independently at site-3 of sodium channels (Nav) and inhibit the inactivation of the activated channels, thereby blocking neuronal transmission. This toxin is active against insects (para/tipE). The sequence is that of Alpha-insect toxin BjaIT from Hottentotta judaicus (Black scorpion).